Reading from the N-terminus, the 416-residue chain is Serine hydroxymethyltransferase (416 aa).

(6S)-5,6,7,8-tetrahydrofolate is bound by residues L121 and 125–127; that span reads GHL. The residue at position 229 (K229) is an N6-(pyridoxal phosphate)lysine.

It belongs to the SHMT family. In terms of assembly, homodimer. Requires pyridoxal 5'-phosphate as cofactor.

Its subcellular location is the cytoplasm. The catalysed reaction is (6R)-5,10-methylene-5,6,7,8-tetrahydrofolate + glycine + H2O = (6S)-5,6,7,8-tetrahydrofolate + L-serine. It participates in one-carbon metabolism; tetrahydrofolate interconversion. Its pathway is amino-acid biosynthesis; glycine biosynthesis; glycine from L-serine: step 1/1. Catalyzes the reversible interconversion of serine and glycine with tetrahydrofolate (THF) serving as the one-carbon carrier. This reaction serves as the major source of one-carbon groups required for the biosynthesis of purines, thymidylate, methionine, and other important biomolecules. Also exhibits THF-independent aldolase activity toward beta-hydroxyamino acids, producing glycine and aldehydes, via a retro-aldol mechanism. In Neisseria gonorrhoeae (strain ATCC 700825 / FA 1090), this protein is Serine hydroxymethyltransferase.